A 237-amino-acid polypeptide reads, in one-letter code: Cytosolic-abundant heat soluble protein 1 (237 aa).

Composition is skewed to basic and acidic residues over residues 1 to 17 (MPYEKHVEQTVVEKTEQ) and 91 to 105 (VDMRPSPKLAEEARR). 2 disordered regions span residues 1 to 35 (MPYEKHVEQTVVEKTEQPGHSSTHHAPAQRTVARE) and 85 to 105 (SGASTEVDMRPSPKLAEEARR). Residues 98–201 (KLAEEARRDA…KEALERSRMA (104 aa)) adopt a coiled-coil conformation. CAHS motif stretches follow at residues 132 to 150 (YRHQTEAEAEKIRRELEKQ) and 169 to 187 (QKREVDLEAKMAKRELDRE). The interval 212–237 (AGHTVSGGTTVSSVDKVETVRERKHH) is disordered. The span at 226 to 237 (DKVETVRERKHH) shows a compositional bias: basic and acidic residues.

The protein belongs to the Cytosolic-abundant heat soluble protein (CAHS) family.

The protein resides in the cytoplasm. Its subcellular location is the nucleus. Its function is as follows. CAHS proteins are cytosolic heat soluble proteins that seem to contribute to the anhydrobiosis in tardigrades, but their specific mechanisms are yet to be identified. It is possible that protection during anhydrobiosis might occur via the stabilization of vitrifying small molecules such as sugars, but not via the direct glass transition of CAHS proteins themselves. This chain is Cytosolic-abundant heat soluble protein 1, found in Ramazzottius varieornatus (Water bear).